A 373-amino-acid chain; its full sequence is 4-hydroxy-3-methylbut-2-en-1-yl diphosphate synthase (flavodoxin) (373 aa).

Cys269, Cys272, Cys304, and Glu311 together coordinate [4Fe-4S] cluster.

This sequence belongs to the IspG family. [4Fe-4S] cluster is required as a cofactor.

It carries out the reaction (2E)-4-hydroxy-3-methylbut-2-enyl diphosphate + oxidized [flavodoxin] + H2O + 2 H(+) = 2-C-methyl-D-erythritol 2,4-cyclic diphosphate + reduced [flavodoxin]. It participates in isoprenoid biosynthesis; isopentenyl diphosphate biosynthesis via DXP pathway; isopentenyl diphosphate from 1-deoxy-D-xylulose 5-phosphate: step 5/6. Functionally, converts 2C-methyl-D-erythritol 2,4-cyclodiphosphate (ME-2,4cPP) into 1-hydroxy-2-methyl-2-(E)-butenyl 4-diphosphate. The sequence is that of 4-hydroxy-3-methylbut-2-en-1-yl diphosphate synthase (flavodoxin) from Baumannia cicadellinicola subsp. Homalodisca coagulata.